The chain runs to 539 residues: Fucosyltransferase 2 (539 aa).

At 1–5 the chain is on the cytoplasmic side; the sequence is MRITE. The helical; Signal-anchor for type II membrane protein transmembrane segment at 6-26 threads the bilayer; that stretch reads ILALFMVLVPVSLVIVAMFGY. Residues 27–539 lie on the Lumenal side of the membrane; the sequence is DQGNGFVQAS…SWGLKLVDNF (513 aa). N-linked (GlcNAc...) asparagine glycosylation is found at N44, N231, and N482.

Belongs to the glycosyltransferase 37 family. In terms of tissue distribution, expressed in roots, stems, leaves, flowers, siliques and seedlings.

It is found in the golgi apparatus. Its subcellular location is the golgi stack membrane. Its pathway is protein modification; protein glycosylation. Functionally, may be involved in cell wall biosynthesis. May act as a fucosyltransferase. This chain is Fucosyltransferase 2 (FUT2), found in Arabidopsis thaliana (Mouse-ear cress).